A 218-amino-acid polypeptide reads, in one-letter code: Adenylate kinase (218 aa).

10–15 (GAGKGT) is an ATP binding site. The interval 30–59 (STGDMLRAAVKEETPLGRKAKEVMDSGNLV) is NMP. Residues Thr-31, Arg-36, 57 to 59 (NLV), 85 to 88 (GFPR), and Gln-92 contribute to the AMP site. An LID region spans residues 122–159 (GRRVHPASGRTYHLTFNPPQQQGVDDETGEPLIQRVDD). ATP contacts are provided by residues Arg-123 and 132–133 (TY). AMP-binding residues include Arg-156 and Arg-167. Position 203 (Gly-203) interacts with ATP.

The protein belongs to the adenylate kinase family. As to quaternary structure, monomer.

Its subcellular location is the cytoplasm. The catalysed reaction is AMP + ATP = 2 ADP. Its pathway is purine metabolism; AMP biosynthesis via salvage pathway; AMP from ADP: step 1/1. Functionally, catalyzes the reversible transfer of the terminal phosphate group between ATP and AMP. Plays an important role in cellular energy homeostasis and in adenine nucleotide metabolism. This Chlorobium phaeovibrioides (strain DSM 265 / 1930) (Prosthecochloris vibrioformis (strain DSM 265)) protein is Adenylate kinase.